Consider the following 107-residue polypeptide: uncharacterized protein (107 aa).

Over 1 to 4 (MSLV) the chain is Cytoplasmic. The chain crosses the membrane as a helical span at residues 5-25 (IDIADTIVSLTALIGLIITLI). The Extracellular segment spans residues 26 to 107 (KFHSQNKEDA…ELCRSSDRSK (82 aa)).

The protein localises to the host membrane. This is an uncharacterized protein from Acidianus sp. F28 (AFV-2).